We begin with the raw amino-acid sequence, 57 residues long: uncharacterized protein (57 aa).

This is an uncharacterized protein from Methanocaldococcus jannaschii (strain ATCC 43067 / DSM 2661 / JAL-1 / JCM 10045 / NBRC 100440) (Methanococcus jannaschii).